We begin with the raw amino-acid sequence, 225 residues long: Cytidylate kinase (225 aa).

12-20 (GPSGAGKGT) is a binding site for ATP.

The protein belongs to the cytidylate kinase family. Type 1 subfamily.

The protein localises to the cytoplasm. It carries out the reaction CMP + ATP = CDP + ADP. The catalysed reaction is dCMP + ATP = dCDP + ADP. The chain is Cytidylate kinase from Vibrio cholerae serotype O1 (strain ATCC 39315 / El Tor Inaba N16961).